Consider the following 150-residue polypeptide: Peptide methionine sulfoxide reductase MsrB (150 aa).

The 124-residue stretch at 9–132 folds into the MsrB domain; it reads EAELKRTLTK…NSAALKFIPF (124 aa). The Nucleophile role is filled by C121.

This sequence belongs to the MsrB Met sulfoxide reductase family.

The catalysed reaction is L-methionyl-[protein] + [thioredoxin]-disulfide + H2O = L-methionyl-(R)-S-oxide-[protein] + [thioredoxin]-dithiol. The sequence is that of Peptide methionine sulfoxide reductase MsrB from Mycoplasma genitalium (strain ATCC 33530 / DSM 19775 / NCTC 10195 / G37) (Mycoplasmoides genitalium).